Here is a 994-residue protein sequence, read N- to C-terminus: Zinc finger protein basonuclin-1 (994 aa).

The segment at 1–29 is disordered; sequence MRRRPPSRGGRGAARARETRRQPRHRSGR. The hydrophobic stretch occupies residues 240 to 249; sequence MTFMLPFQFF. 2 C2H2-type zinc fingers span residues 357 to 380 and 385 to 414; these read VFCT…NAVH and HKCT…PRLH. Disordered stretches follow at residues 402 to 425 and 444 to 472; these read RNRH…RDKD and TVTS…FPNI. The Nuclear localization signal motif lies at 533–539; sequence PKKKSRK. Phosphoserine occurs at positions 537 and 541. The tract at residues 555–639 is disordered; the sequence is NEKRHNLSSD…HNSERETEQT (85 aa). Residues 563–578 are compositionally biased toward acidic residues; the sequence is SDEDMPLQVVSEDEQE. Positions 603 to 614 are enriched in basic and acidic residues; the sequence is PEGERPCHRESV. The span at 615–630 shows a compositional bias: polar residues; the sequence is IESSGAISQTPEQATH. 2 consecutive C2H2-type zinc fingers follow at residues 720-743 and 748-775; these read FQCD…KNMH and HTCT…LNLH. Positions 859-877 are enriched in low complexity; it reads STTSSMKSESSSHSSWDSD. The segment at 859-881 is disordered; it reads STTSSMKSESSSHSSWDSDGVSE. C2H2-type zinc fingers lie at residues 928–951 and 956–983; these read ITCH…KTVH and HKCK…PNLH. Residues 970-994 form a disordered region; that stretch reads VRSRNRHSQNPNLHKSLASSPSHLQ.

Interacts with HSF2BP (via C-terminus). Phosphorylation on Ser-537 and Ser-541 leads to cytoplasmic localization. In epidermis, primarily detected in cells of the basal or immediately suprabasal layers (at protein level). In hair follicles, mainly expressed in the outer root sheath (at protein level). Expressed in epidermis, testis and foreskin, and to a lower extent in thymus, spleen, mammary glands, placenta, brain and heart. Expressed in the ovary, notably in oocytes.

It localises to the nucleus. The protein localises to the cytoplasm. Its subcellular location is the nucleoplasm. In terms of biological role, transcriptional activator. It is likely involved in the regulation of keratinocytes terminal differentiation in squamous epithelia and hair follicles. Required for the maintenance of spermatogenesis. It is involved in the positive regulation of oocyte maturation, probably acting through the control of BMP15 levels and regulation of AKT signaling cascade. May also play a role in the early development of embryos. This Homo sapiens (Human) protein is Zinc finger protein basonuclin-1 (BNC1).